The primary structure comprises 148 residues: Large ribosomal subunit protein bL9 (148 aa).

This sequence belongs to the bacterial ribosomal protein bL9 family.

Its function is as follows. Binds to the 23S rRNA. In Bacillus cereus (strain B4264), this protein is Large ribosomal subunit protein bL9.